The following is a 302-amino-acid chain: Transcription factor bHLH7 (302 aa).

The segment at 124-154 is disordered; the sequence is QPMSQPAPPMPHQQSTIRPRVRARRGQATDP. In terms of domain architecture, bHLH spans 150-199; that stretch reads QATDPHSIAERLRRERIAERIRSLQELVPTVNKTDRAAMIDEIVDYVKFL.

As to quaternary structure, homodimer. In terms of tissue distribution, expressed constitutively in roots, leaves, stems and flowers.

It localises to the nucleus. The polypeptide is Transcription factor bHLH7 (BHLH7) (Arabidopsis thaliana (Mouse-ear cress)).